We begin with the raw amino-acid sequence, 722 residues long: Phenylalanine ammonia-lyase lenB (722 aa).

The active-site Proton donor/acceptor is the Y83. Positions 117–136 (LPTDRSSSRPSSRYPHGLRS) are disordered. Residues 190–192 (ASG) constitute a cross-link (5-imidazolinone (Ala-Gly)). At S191 the chain carries 2,3-didehydroalanine (Ser). N247, Q334, R340, N370, K441, E469, and N472 together coordinate (E)-cinnamate.

It belongs to the PAL/histidase family. Post-translationally, contains an active site 4-methylidene-imidazol-5-one (MIO), which is formed autocatalytically by cyclization and dehydration of residues Ala-Ser-Gly.

The catalysed reaction is L-phenylalanine = (E)-cinnamate + NH4(+). Its pathway is alkaloid biosynthesis. In terms of biological role, phenylalanine ammonia-lyase; part of the gene cluster that mediates the biosynthesis of the ergot alkaloids lentopeptins A and B. Within the pathway, lenB provides the cinnamic acid starter unit for the synthesis of the N-acyldiketopiperazine intermediate by the NRPS lenA. Cinnamic acid is condensed with the Ala-Val-Ala peptide chain by lenA which leads to the N-acyldiketopiperazine intermediate which in turn is converted into lentopeptins A and B by the cytochrome P450 monooxygenase lenC. In Aspergillus lentulus, this protein is Phenylalanine ammonia-lyase lenB.